Consider the following 319-residue polypeptide: MATTKPYRVLLYYMYTTIENPEEFAAEHLEFCNSLELKGRILVAKEGINGTCSGTVEQTEKYMEAMNNDPRFDGIVFKIDEADGHAFKKMHVRPRPELVTLRLEDDINPHEITGKYLEPKDFYEAMKQEDTVIIDARNDYEFDLGHFKGAIKPDIESFRELPDWIRENKEVLEGKKILTYCTGGIRCEKFSGWLVREGYEDVSQLHGGIVTYGKDPEVQGELWDGQCYVFDERIAVPVNQKEHVIVGKDHFTGEPCERYVNCSNPECNKKILCSEENEAKYLRACSHECRVSPRNRYVIQHELTEEQVAAALEQIEAGK.

A Rhodanese domain is found at 127–221; that stretch reads KQEDTVIIDA…YGKDPEVQGE (95 aa). Cys-181 functions as the Cysteine persulfide intermediate in the catalytic mechanism.

It belongs to the TrhO family.

It carries out the reaction uridine(34) in tRNA + AH2 + O2 = 5-hydroxyuridine(34) in tRNA + A + H2O. In terms of biological role, catalyzes oxygen-dependent 5-hydroxyuridine (ho5U) modification at position 34 in tRNAs. This Bacillus cereus (strain B4264) protein is tRNA uridine(34) hydroxylase.